We begin with the raw amino-acid sequence, 328 residues long: Sterol demethylase protein B (328 aa).

This sequence belongs to the NAD(P)-dependent epimerase/dehydratase family.

It carries out the reaction a 3beta-hydroxy-4alpha-methylsteroid-4beta-carboxylate + NAD(+) = a 4alpha-methyl-3-oxosteroid + CO2 + NADH. The catalysed reaction is a 3beta-hydroxy-4alpha-methylsteroid-4beta-carboxylate + NADP(+) = a 4alpha-methyl-3-oxosteroid + CO2 + NADPH. The enzyme catalyses 4beta-carboxy-4alpha-methyl-5alpha-cholesta-8,24-dien-3beta-ol + NAD(+) = 3-dehydro-4alpha-methylzymosterol + CO2 + NADH. It catalyses the reaction 4beta-carboxy-4alpha-methyl-5alpha-cholesta-8,24-dien-3beta-ol + NADP(+) = 3-dehydro-4alpha-methylzymosterol + CO2 + NADPH. It carries out the reaction 3-dehydro-4alpha-methylzymosterol + NADPH + H(+) = 4alpha-methylzymosterol + NADP(+). It functions in the pathway steroid biosynthesis; sterol biosynthesis. Participates in the biosynthesis of bacterial sterols. Together with SdmA, removes one methyl group from the C-4 position of 4,4-dimethylated steroid molecules. SdmB catalyzes an oxidative decarboxylation that results in reduction of the 3beta-hydroxy group at the C-3 carbon to an oxo group. It also functions as a ketoreductase that converts the C-3 oxo group back to a hydroxyl group after C-4 demethylation. The polypeptide is Sterol demethylase protein B (Methylococcus capsulatus (strain ATCC 33009 / NCIMB 11132 / Bath)).